Consider the following 208-residue polypeptide: UPF0316 protein SERP1448 (208 aa).

Transmembrane regions (helical) follow at residues 8–28, 40–60, and 66–86; these read PWLM…FLTM, VAAV…GLVM, and IQNI…GMKI.

The protein belongs to the UPF0316 family.

The protein resides in the cell membrane. The polypeptide is UPF0316 protein SERP1448 (Staphylococcus epidermidis (strain ATCC 35984 / DSM 28319 / BCRC 17069 / CCUG 31568 / BM 3577 / RP62A)).